The following is a 921-amino-acid chain: Phototropin-1A (921 aa).

Residues 1 to 11 are compositionally biased toward gly residues; sequence MASKGTEGGHG. Disordered stretches follow at residues 1 to 59 and 88 to 118; these read MASK…SPFL and TGLP…QSAA. The segment covering 40–51 has biased composition (low complexity); sequence SSASSFRTAAAA. Over residues 97–117 the composition is skewed to polar residues; sequence RPSSGSARTSSEDNPQQQQSA. The 75-residue stretch at 123–197 folds into the PAS 1 domain; that stretch reads VSEELRAALS…KIRQSLANGS (75 aa). FMN-binding positions include 172–177, R190, N205, N215, and Q236; that span reads NCRFLQ. Position 173 is an S-4a-FMN cysteine (C173). Residues 197 to 251 form the PAC 1 domain; the sequence is SNYCGRILNYKKDGTPFWNLLTIAPIKDEDGRLLKFIGMQVEVSKYTEGKKDTVV. Residues 286-295 are compositionally biased toward polar residues; sequence RSLSESSNNT. Disordered stretches follow at residues 286–347 and 364–390; these read RSLS…NRTR and SVEK…ESFE. Basic and acidic residues-rich tracts occupy residues 312–321 and 364–376; these read PSKRSSESGS and SVEK…RDED. Positions 400 to 473 constitute a PAS 2 domain; the sequence is RGIDLATTLE…RKIRDAIDNQ (74 aa). Residues 449–454, R467, N482, N492, and Q513 each bind FMN; that span reads NCRFLQ. C450 bears the S-4a-FMN cysteine mark. Positions 474 to 528 constitute a PAC 2 domain; that stretch reads AEVTVQLINYTKSGKKFWNLFHLQPMRDQKGDVQYFIGVQLDGTEHVQDDAAKEG. Positions 594–881 constitute a Protein kinase domain; it reads FRPVKPLGSG…ANEIKGHPFF (288 aa). ATP is bound by residues 600–608 and K623; that span reads LGSGDTGSV. D719 acts as the Proton acceptor in catalysis.

The protein belongs to the protein kinase superfamily. Ser/Thr protein kinase family. In terms of assembly, homodimer. FMN is required as a cofactor. In terms of processing, autophosphorylated in response to blue light irradiation. Post-translationally, 2 molecules of FMN bind covalently to cysteines after exposure to blue light and are reversed in the dark. As to expression, highly expressed in coleoptiles of dark-grown seedlings.

The catalysed reaction is L-seryl-[protein] + ATP = O-phospho-L-seryl-[protein] + ADP + H(+). It catalyses the reaction L-threonyl-[protein] + ATP = O-phospho-L-threonyl-[protein] + ADP + H(+). Protein kinase that acts as a blue light photoreceptor in a signal-transduction pathway for phototropic responses. Regulates a wide range of physiological activities in plants that maximize the efficiency of photosynthesis, such as chloroplast relocations, stomata opening, and leaf expansion. In Oryza sativa subsp. japonica (Rice), this protein is Phototropin-1A (PHOT1A).